A 195-amino-acid polypeptide reads, in one-letter code: Putative CheY-P phosphatase CheC1 (195 aa).

This sequence belongs to the CheC family.

Its function is as follows. Catalyzes the dephosphorylation of CheY-P. This chain is Putative CheY-P phosphatase CheC1 (cheC1), found in Halobacterium salinarum (strain ATCC 29341 / DSM 671 / R1).